The chain runs to 406 residues: 12S rRNA N(4)-cytidine methyltransferase METTL15 (406 aa).

A mitochondrion-targeting transit peptide spans 1–22 (MLRYPYFYRTYNRLFSHFVDSG). S-adenosyl-L-methionine contacts are provided by residues 100–102 (GGH), D119, F146, D169, and Q176. A Phosphoserine modification is found at S358.

This sequence belongs to the methyltransferase superfamily. RsmH family.

It localises to the mitochondrion matrix. The enzyme catalyses cytidine(839) in 12S rRNA + S-adenosyl-L-methionine = N(4)-methylcytidine(839) in 12S rRNA + S-adenosyl-L-homocysteine + H(+). In terms of biological role, N4-methylcytidine (m4C) methyltransferase responsible for the methylation of position C839 in mitochondrial 12S rRNA. Involved in the stabilization of 12S rRNA folding, therefore facilitating the assembly of the mitochondrial small ribosomal subunits. This chain is 12S rRNA N(4)-cytidine methyltransferase METTL15, found in Mus musculus (Mouse).